The primary structure comprises 246 residues: MWIGVISLFPEMFKAITEFGVTGRAVKHNLLKVECWNPRNFTFDKHKTVDDRPYGGGPGMLMMVQPLRDAIHTAKAAAGEGAKVIYLSPQGRKLDQDGVTELAQNQKLILVCGRYEGIDERLIQTEIDEEWSIGDYVLTGGELPAMTLIDAVARFIPGVLGKQASAEEDSFADGLLDCPHYTRPEVLEGLTVPPVLMSGHHEEIRKWRLKQSLQRTWFRRPELLEGLALTDEQRKLLKEAQAEHNS.

Residues G113 and 133–138 each bind S-adenosyl-L-methionine; that span reads IGDYVL.

This sequence belongs to the RNA methyltransferase TrmD family. Homodimer.

Its subcellular location is the cytoplasm. It carries out the reaction guanosine(37) in tRNA + S-adenosyl-L-methionine = N(1)-methylguanosine(37) in tRNA + S-adenosyl-L-homocysteine + H(+). In terms of biological role, specifically methylates guanosine-37 in various tRNAs. In Haemophilus influenzae (strain 86-028NP), this protein is tRNA (guanine-N(1)-)-methyltransferase.